A 412-amino-acid chain; its full sequence is Putative potassium channel protein RPA4233 (412 aa).

The next 5 membrane-spanning stretches (helical) occupy residues phenylalanine 35 to methionine 55, alanine 65 to alanine 85, leucine 164 to isoleucine 184, tryptophan 202 to isoleucine 222, and methionine 225 to valine 245. The short motif at threonine 210–aspartate 215 is the Selectivity filter element. A nucleoside 3',5'-cyclic phosphate is bound at residue leucine 270 to arginine 388.

This sequence belongs to the potassium channel family.

The protein localises to the cell membrane. The protein is Putative potassium channel protein RPA4233 of Rhodopseudomonas palustris (strain ATCC BAA-98 / CGA009).